The chain runs to 416 residues: 4-hydroxy-3-methylbut-2-en-1-yl diphosphate synthase (flavodoxin) (416 aa).

[4Fe-4S] cluster contacts are provided by C304, C307, C350, and E357.

This sequence belongs to the IspG family. It depends on [4Fe-4S] cluster as a cofactor.

The catalysed reaction is (2E)-4-hydroxy-3-methylbut-2-enyl diphosphate + oxidized [flavodoxin] + H2O + 2 H(+) = 2-C-methyl-D-erythritol 2,4-cyclic diphosphate + reduced [flavodoxin]. The protein operates within isoprenoid biosynthesis; isopentenyl diphosphate biosynthesis via DXP pathway; isopentenyl diphosphate from 1-deoxy-D-xylulose 5-phosphate: step 5/6. Its function is as follows. Converts 2C-methyl-D-erythritol 2,4-cyclodiphosphate (ME-2,4cPP) into 1-hydroxy-2-methyl-2-(E)-butenyl 4-diphosphate. This Rhizobium leguminosarum bv. trifolii (strain WSM2304) protein is 4-hydroxy-3-methylbut-2-en-1-yl diphosphate synthase (flavodoxin).